The sequence spans 277 residues: Large ribosomal subunit protein uL2c (277 aa).

Residues 228-254 (VDHPHGGGEGRCPVGHAQPRTPWGKPA) form a disordered region.

It belongs to the universal ribosomal protein uL2 family. Part of the 50S ribosomal subunit.

It is found in the plastid. It localises to the chloroplast. The protein is Large ribosomal subunit protein uL2c (rpl2) of Ostreococcus tauri.